A 332-amino-acid polypeptide reads, in one-letter code: Leucine carboxyl methyltransferase 1 homolog (332 aa).

S-adenosyl-L-methionine-binding positions include lysine 22, arginine 57, glycine 83, aspartate 107, 153-154, and glutamate 180; that span reads DL.

This sequence belongs to the methyltransferase superfamily. LCMT family.

Its subcellular location is the cytoplasm. The protein localises to the membrane. It carries out the reaction [phosphatase 2A protein]-C-terminal L-leucine + S-adenosyl-L-methionine = [phosphatase 2A protein]-C-terminal L-leucine methyl ester + S-adenosyl-L-homocysteine. Its function is as follows. Methylates the carboxyl group of the C-terminal leucine residue of protein phosphatase 2A (PP2A) catalytic subunits to form alpha-leucine ester residues. Involved in brassinosteroid (BR) signaling. Plays a negative role in BR signaling pathway. Functions as a positive regulator of BRI1 receptor-kinase degradation. Methylates PP2A, thus facilitating its association with activated BRI1. This leads to receptor dephosphorylation and degradation, and thus to the termination of BR signaling. May act upstream of ASK7/BIN2. Involved in methylation of PP2A during environmental stress responses. This Arabidopsis thaliana (Mouse-ear cress) protein is Leucine carboxyl methyltransferase 1 homolog.